The chain runs to 771 residues: Dol-P-Glc:Glc(2)Man(9)GlcNAc(2)-PP-Dol alpha-1,2-glucosyltransferase (771 aa).

7 helical membrane-spanning segments follow: residues 45–65, 160–180, 182–202, 221–241, 293–313, 326–346, and 357–377; these read FITA…LALV, VSFY…IFFF, GLYY…WNHL, VVLG…VVVY, VDMA…IAAL, HITI…VVLG, and LPQM…LLIP. The tract at residues 392-449 is disordered; that stretch reads TPTPSHTTTKDPGRSSWRFTKPSITSKKSSTTKPPQRSGPTPASSSSSSSSFSPDTNS. Composition is skewed to low complexity over residues 411 to 426 and 435 to 449; these read TKPS…TKPP and SSSS…DTNS. An N-linked (GlcNAc...) asparagine glycan is attached at N448. Transmembrane regions (helical) follow at residues 469-489 and 503-525; these read PFYL…NTII and YIFR…AYTL. A compositionally biased stretch (basic and acidic residues) spans 584–593; sequence QKNIKDKQKE. Positions 584-605 are disordered; sequence QKNIKDKQKEVEEEEEEEEKED. Acidic residues predominate over residues 594–604; sequence VEEEEEEEEKE. Helical transmembrane passes span 631-651 and 656-676; these read TSTV…APLV and FILP…SSSL. Positions 682–708 are disordered; it reads SSSFASSTTESGNGDGNDAATAARQQQ. A helical membrane pass occupies residues 728 to 748; the sequence is LALETVWFLAINIGTMYMFLF.

It belongs to the ALG10 glucosyltransferase family.

It localises to the endoplasmic reticulum membrane. It carries out the reaction an alpha-D-Glc-(1-&gt;3)-alpha-D-Glc-(1-&gt;3)-alpha-D-Man-(1-&gt;2)-alpha-D-Man-(1-&gt;2)-alpha-D-Man-(1-&gt;3)-[alpha-D-Man-(1-&gt;2)-alpha-D-Man-(1-&gt;3)-[alpha-D-Man-(1-&gt;2)-alpha-D-Man-(1-&gt;6)]-alpha-D-Man-(1-&gt;6)]-beta-D-Man-(1-&gt;4)-beta-D-GlcNAc-(1-&gt;4)-alpha-D-GlcNAc-diphospho-di-trans,poly-cis-dolichol + a di-trans,poly-cis-dolichyl beta-D-glucosyl phosphate = a alpha-D-Glc-(1-&gt;2)-alpha-D-Glc-(1-&gt;3)-alpha-D-Glc-(1-&gt;3)-alpha-D-Man-(1-&gt;2)-alpha-D-Man-(1-&gt;2)-alpha-D-Man-(1-&gt;3)-[alpha-D-Man-(1-&gt;2)-alpha-D-Man-(1-&gt;3)-[alpha-D-Man-(1-&gt;2)-alpha-D-Man-(1-&gt;6)]-alpha-D-Man-(1-&gt;6)]-beta-D-Man-(1-&gt;4)-beta-D-GlcNAc-(1-&gt;4)-alpha-D-GlcNAc-diphospho-di-trans,poly-cis-dolichol + a di-trans,poly-cis-dolichyl phosphate + H(+). The protein operates within protein modification; protein glycosylation. Dol-P-Glc:Glc(2)Man(9)GlcNAc(2)-PP-Dol alpha-1,2-glucosyltransferase that operates in the biosynthetic pathway of dolichol-linked oligosaccharides, the glycan precursors employed in protein asparagine (N)-glycosylation. The assembly of dolichol-linked oligosaccharides begins on the cytosolic side of the endoplasmic reticulum membrane and finishes in its lumen. The sequential addition of sugars to dolichol pyrophosphate produces dolichol-linked oligosaccharides containing fourteen sugars, including two GlcNAcs, nine mannoses and three glucoses. Once assembled, the oligosaccharide is transferred from the lipid to nascent proteins by oligosaccharyltransferases. In the lumen of the endoplasmic reticulum, adds the third and last glucose residue from dolichyl phosphate glucose (Dol-P-Glc) onto the lipid-linked oligosaccharide intermediate Glc(2)Man(9)GlcNAc(2)-PP-Dol to produce Glc(3)Man(9)GlcNAc(2)-PP-Dol. The chain is Dol-P-Glc:Glc(2)Man(9)GlcNAc(2)-PP-Dol alpha-1,2-glucosyltransferase (alg-10) from Neurospora crassa (strain ATCC 24698 / 74-OR23-1A / CBS 708.71 / DSM 1257 / FGSC 987).